Here is a 702-residue protein sequence, read N- to C-terminus: Polyribonucleotide nucleotidyltransferase (702 aa).

Residues Asp-485 and Asp-491 each contribute to the Mg(2+) site. Positions 552 to 612 (PRTEIICIDP…EGVKKAISII (61 aa)) constitute a KH domain. In terms of domain architecture, S1 motif spans 622–690 (GEIYLGKVTK…NQGRINLSRK (69 aa)).

The protein belongs to the polyribonucleotide nucleotidyltransferase family. Mg(2+) is required as a cofactor.

The protein localises to the cytoplasm. The enzyme catalyses RNA(n+1) + phosphate = RNA(n) + a ribonucleoside 5'-diphosphate. Its function is as follows. Involved in mRNA degradation. Catalyzes the phosphorolysis of single-stranded polyribonucleotides processively in the 3'- to 5'-direction. This Clostridium botulinum (strain Loch Maree / Type A3) protein is Polyribonucleotide nucleotidyltransferase.